The primary structure comprises 528 residues: Protein MGF 505-7R (528 aa).

3 ANK repeats span residues 129-158, 261-290, and 292-322; these read ECDL…LLNV, HVNR…VPHK, and IERM…KVKN.

Belongs to the asfivirus MGF 505 family. As to quaternary structure, interacts with host STING1. Interacts with host JAK1; this interaction leads to JAK1 degradation. Interacts with host JAK2; this interaction leads to JAK2 degradation. Interacts with host RELA; this interaction inhibits NF-kappa-B promoter activity.

Its subcellular location is the host cytoplasm. In terms of biological role, plays a role in virus cell tropism, and may be required for efficient virus replication in macrophages. Interferes with host NF-kappa-B promoter activity mediated by TLR8. Mechanistically, inhibits the phosphorylation and subsequent nuclear translocation of host NF-kappa-B RELA subunit downstream of TLR8. Promotes the expression of the autophagy-related protein host ULK1 to degrade host STING and inhibit the interferon response. Also inhibits JAK1- and JAK2-mediated signaling and thus negatively regulates the IFN-gamma signaling. The sequence is that of Protein MGF 505-7R from Ornithodoros (relapsing fever ticks).